We begin with the raw amino-acid sequence, 359 residues long: E3 ubiquitin-protein ligase RNF146 (359 aa).

An RING-type zinc finger spans residues 37–75 (CAICLQTCVHPVSLPCKHVFCYLCVKGASWLGKRCALCR). Residues Lys85 and Lys95 each participate in a glycyl lysine isopeptide (Lys-Gly) (interchain with G-Cter in ubiquitin) cross-link. In terms of domain architecture, WWE spans 92 to 168 (EELKAASRGN…EHGRRRKIKR (77 aa)). 3 residues coordinate a glycoprotein: Tyr108, Arg111, and Trp115. Residue Lys131 forms a Glycyl lysine isopeptide (Lys-Gly) (interchain with G-Cter in ubiquitin) linkage. A glycoprotein-binding residues include Tyr145, Gln154, Arg164, and Lys176. A Glycyl lysine isopeptide (Lys-Gly) (interchain with G-Cter in ubiquitin) cross-link involves residue Lys176. A disordered region spans residues 254–359 (GDNTAERSHR…PDGQCTVTEV (106 aa)). Positions 284–298 (SIEETESDASSDSED) are enriched in acidic residues. Phosphoserine is present on residues Ser290 and Ser294. Positions 306-323 (HSLTQQRLLVSNANQTVP) are enriched in polar residues.

As to quaternary structure, can form homooligomers. Interacts with PARsylated AXIN1, AXIN2, BLZF1, CASC3, H1-2, IPO7, LIG3, NCL, PARP1, XRCC1, XRCC5 and XRCC6. Interacts with DDB1, DHX15, IQGAP1, LRPPRC, PARP2, PRKDC, RUVBL2, TNKS1 and TNKS2. Binding often leads to interactor ubiquitination, in the presence of the appropriate E1 and E2 enzymes, and proteasomal degradation. Ubiquitinated; autoubiquitinated. Polyubiquitinated in the presence of UBE2D1, UBE2D2 and UBE2D3. Multimonoubiquitinated in the presence of UBE2E1. Not ubiquitinated in the presence of UBE2H, CDC34, UBE2L3, UBE2L6, nor UBE2C. In the absence of PAR, autoubiquitination occurs on Lys-85, Lys-95 and Lys-176 via 'Lys-11' and 'Lys-48' ubiquitin linkages. In the presence of PAR, Lys-131 and Lys-176 are ubiquitinated via 'Lys-6', 'Lys-33' and 'Lys-48' ubiquitin linkages. Autoubiquitination is enhanced upon PAR-binding. In terms of tissue distribution, ubiquitously expressed. Up-regulated in brains from patients with Alzheimer disease.

The protein localises to the cytoplasm. The protein resides in the cytosol. Its subcellular location is the nucleus. The catalysed reaction is S-ubiquitinyl-[E2 ubiquitin-conjugating enzyme]-L-cysteine + [acceptor protein]-L-lysine = [E2 ubiquitin-conjugating enzyme]-L-cysteine + N(6)-ubiquitinyl-[acceptor protein]-L-lysine.. It functions in the pathway protein modification; protein ubiquitination. Functionally, E3 ubiquitin-protein ligase that specifically binds poly-ADP-ribosylated (PARsylated) proteins and mediates their ubiquitination and subsequent degradation. May regulate many important biological processes, such as cell survival and DNA damage response. Acts as an activator of the Wnt signaling pathway by mediating the ubiquitination of PARsylated AXIN1 and AXIN2, 2 key components of the beta-catenin destruction complex. Acts in cooperation with tankyrase proteins (TNKS and TNKS2), which mediate PARsylation of target proteins AXIN1, AXIN2, BLZF1, CASC3, TNKS and TNKS2. Recognizes and binds tankyrase-dependent PARsylated proteins via its WWE domain and mediates their ubiquitination, leading to their degradation. Different ubiquitin linkage types have been observed: TNKS2 undergoes ubiquitination at 'Lys-48' and 'Lys-63', while AXIN1 is only ubiquitinated at 'Lys-48'. May regulate TNKS and TNKS2 subcellular location, preventing aggregation at a centrosomal location. Neuroprotective protein. Protects the brain against N-methyl-D-aspartate (NMDA) receptor-mediated glutamate excitotoxicity and ischemia, by interfering with PAR-induced cell death, called parthanatos. Prevents nuclear translocation of AIFM1 in a PAR-binding dependent manner. Does not affect PARP1 activation. Protects against cell death induced by DNA damaging agents, such as N-methyl-N-nitro-N-nitrosoguanidine (MNNG) and rescues cells from G1 arrest. Promotes cell survival after gamma-irradiation. Facilitates DNA repair. In Homo sapiens (Human), this protein is E3 ubiquitin-protein ligase RNF146 (RNF146).